The sequence spans 108 residues: Movement protein TGB2 (108 aa).

At 1 to 8 (MPLTPPPD) the chain is on the cytoplasmic side. A helical membrane pass occupies residues 9 to 29 (YTKPFIAVVVGGTLAAFVLLL). The Lumenal segment spans residues 30 to 71 (TRNTLPHTGDNLHSLPHGGTYCDGTKRIRYGGPHRSHVPELP). A helical membrane pass occupies residues 72 to 92 (AKSWALITVVAILIALHFSCL). Residues 93 to 108 (RTHRVHRCVLCHTTSG) are Cytoplasmic-facing.

It belongs to the Tymovirales TGBp2 protein family.

The protein resides in the host endoplasmic reticulum membrane. In terms of biological role, plays a role in viral cell-to-cell propagation, by facilitating genome transport to neighboring plant cells through plasmosdesmata,. The protein is Movement protein TGB2 of Lily virus X.